The sequence spans 351 residues: Histidine protein kinase SaeS (351 aa).

A run of 2 helical transmembrane segments spans residues isoleucine 9–isoleucine 29 and threonine 40–isoleucine 60. Positions asparagine 61–asparagine 114 constitute an HAMP domain. One can recognise a Histidine kinase domain in the interval asparagine 129–aspartate 348. A Phosphohistidine; by autocatalysis modification is found at histidine 132.

Post-translationally, autophosphorylated.

It is found in the cell membrane. It carries out the reaction ATP + protein L-histidine = ADP + protein N-phospho-L-histidine.. In terms of biological role, member of the two-component regulatory system SaeR/SaeS involved in the regulation of staphylococcal virulence factors in a strain-dependent fashion. Probably functions as a membrane-associated protein kinase that upon sensing the appropriate signal, autophosphorylates and in turn activates the cytosolic response regulator SaeR. This Staphylococcus aureus (strain USA300) protein is Histidine protein kinase SaeS (saeS).